A 245-amino-acid chain; its full sequence is Biosynthetic peptidoglycan transglycosylase (245 aa).

A helical transmembrane segment spans residues 29 to 49 (IVLAVLIVLILPYALIVFYLL).

Belongs to the glycosyltransferase 51 family.

Its subcellular location is the cell inner membrane. The enzyme catalyses [GlcNAc-(1-&gt;4)-Mur2Ac(oyl-L-Ala-gamma-D-Glu-L-Lys-D-Ala-D-Ala)](n)-di-trans,octa-cis-undecaprenyl diphosphate + beta-D-GlcNAc-(1-&gt;4)-Mur2Ac(oyl-L-Ala-gamma-D-Glu-L-Lys-D-Ala-D-Ala)-di-trans,octa-cis-undecaprenyl diphosphate = [GlcNAc-(1-&gt;4)-Mur2Ac(oyl-L-Ala-gamma-D-Glu-L-Lys-D-Ala-D-Ala)](n+1)-di-trans,octa-cis-undecaprenyl diphosphate + di-trans,octa-cis-undecaprenyl diphosphate + H(+). It functions in the pathway cell wall biogenesis; peptidoglycan biosynthesis. Functionally, peptidoglycan polymerase that catalyzes glycan chain elongation from lipid-linked precursors. The polypeptide is Biosynthetic peptidoglycan transglycosylase (Rhizobium johnstonii (strain DSM 114642 / LMG 32736 / 3841) (Rhizobium leguminosarum bv. viciae)).